Reading from the N-terminus, the 238-residue chain is Monocyte to macrophage differentiation factor (238 aa).

Residues 1-28 (MQFRNRFQRFMNHRAPANGRYKPTCYEH) lie on the Cytoplasmic side of the membrane. Residues 29 to 49 (AANCYTHAFLIVPAIVGSALL) form a helical membrane-spanning segment. At 50–61 (HRLSDDCWEKIT) the chain is on the lumenal side. The helical transmembrane segment at 62–82 (AWIYGMGLCALFIVSTVFHIV) threads the bilayer. Residues 83-101 (SWKKSHLRTVEHCFHMCDR) are Cytoplasmic-facing. A helical membrane pass occupies residues 102–122 (MVIYFFIAASYAPWLNLRELG). P123 is a topological domain (lumenal). Residues 124–144 (LASHMRWFIWLMAAGGTIYVF) form a helical membrane-spanning segment. The Cytoplasmic segment spans residues 145–151 (LYHEKYK). A helical membrane pass occupies residues 152-172 (VVELFFYLTMGFSPALVVTSM). Over 173–174 (NN) the chain is Lumenal. The chain crosses the membrane as a helical span at residues 175–195 (TDGLQELACGGLIYCLGVVFF). Topologically, residues 196-198 (KSD) are cytoplasmic. A helical transmembrane segment spans residues 199–219 (GIIPFAHAIWHLFVATAAAVH). The Lumenal portion of the chain corresponds to 220-238 (YYAIWKYLYRSPTDFIRHL).

The protein belongs to the ADIPOR family. Preferentially expressed in the brain.

Its subcellular location is the late endosome membrane. The protein localises to the lysosome membrane. Its function is as follows. Is involved in the dynamics of lysosomal membranes associated with microglial activation following brain lesion. This is Monocyte to macrophage differentiation factor from Rattus norvegicus (Rat).